A 276-amino-acid chain; its full sequence is Cytoplasmic envelopment protein 1 (276 aa).

This sequence belongs to the herpesviridae cytoplasmic envelopment protein 1 family.

It localises to the virion. Its subcellular location is the virion tegument. It is found in the host cytoplasm. The protein localises to the host Golgi apparatus. Plays a critical role in cytoplasmic virus egress. Participates in the final step of tegumentation and envelope acquisition within the host cytoplasm. This chain is Cytoplasmic envelopment protein 1 (42), found in Equus caballus (Horse).